A 494-amino-acid chain; its full sequence is MGSTSSLYAAIDLGSNSFHMLVVREVAGSIQTLTRIKRKVRLAAGLNSENDLSNEAMERGWQCLRLFAERLQDIPPSQIRVVATATLRLAVNAGDFIAKAQEILGCPVQVISGEEEARLIYQGVAHTTGGADQRLVVDISGASTELVTGTGAQTTSLFSLSMGCVTWLERYFADRNLGQENFDAAEKAAREVLRPVADELRYHGWKVCVGASGTVQALQEIMMAQGMDERITLEKLQQLKQRAIHCGRLEELEIDGLTLERALVFPSGLAILIAIFTELNIQCMTLAGGALREGLVYGMLHLAVEQDIRSRTLRNIQRRFMIDIDQAQRVAKVAANFFDQVENEWHLEAISRDLLISACQLHEIGLSVDFKQAPQHAAYLVRNLDLPGFTPAQKKLLATLLLNQTNPVDLSSLHQQNAVPPRVAEQLCRLLRLAIIFASRRRDDLVPEMTLQANHELLTLTLPQGWLTQHPLGKEIIAQENQWQSYVHWPLEVH.

This sequence belongs to the GppA/Ppx family. GppA subfamily.

It carries out the reaction guanosine 3'-diphosphate 5'-triphosphate + H2O = guanosine 3',5'-bis(diphosphate) + phosphate + H(+). It participates in purine metabolism; ppGpp biosynthesis; ppGpp from GTP: step 2/2. Catalyzes the conversion of pppGpp to ppGpp. Guanosine pentaphosphate (pppGpp) is a cytoplasmic signaling molecule which together with ppGpp controls the 'stringent response', an adaptive process that allows bacteria to respond to amino acid starvation, resulting in the coordinated regulation of numerous cellular activities. The chain is Guanosine-5'-triphosphate,3'-diphosphate pyrophosphatase from Shigella flexneri serotype 5b (strain 8401).